Reading from the N-terminus, the 351-residue chain is UDP-3-O-acylglucosamine N-acyltransferase (351 aa).

Histidine 240 acts as the Proton acceptor in catalysis.

Belongs to the transferase hexapeptide repeat family. LpxD subfamily. In terms of assembly, homotrimer.

The enzyme catalyses a UDP-3-O-[(3R)-3-hydroxyacyl]-alpha-D-glucosamine + a (3R)-hydroxyacyl-[ACP] = a UDP-2-N,3-O-bis[(3R)-3-hydroxyacyl]-alpha-D-glucosamine + holo-[ACP] + H(+). It functions in the pathway bacterial outer membrane biogenesis; LPS lipid A biosynthesis. In terms of biological role, catalyzes the N-acylation of UDP-3-O-acylglucosamine using 3-hydroxyacyl-ACP as the acyl donor. Is involved in the biosynthesis of lipid A, a phosphorylated glycolipid that anchors the lipopolysaccharide to the outer membrane of the cell. In Pseudomonas fluorescens (strain SBW25), this protein is UDP-3-O-acylglucosamine N-acyltransferase.